The following is a 466-amino-acid chain: Asparagine--tRNA ligase (466 aa).

Belongs to the class-II aminoacyl-tRNA synthetase family. As to quaternary structure, homodimer.

The protein localises to the cytoplasm. It catalyses the reaction tRNA(Asn) + L-asparagine + ATP = L-asparaginyl-tRNA(Asn) + AMP + diphosphate + H(+). In Shewanella sp. (strain MR-4), this protein is Asparagine--tRNA ligase.